Reading from the N-terminus, the 440-residue chain is Ran-specific GTPase-activating protein 30 (440 aa).

Positions 1–314 (MDEILAKAGS…LVLKIDRSDD (314 aa)) constitute a RanBD1 domain. Thr272 is subject to Phosphothreonine. A compositionally biased stretch (acidic residues) spans 341–371 (IEEDEEEDEEEDEEEGKDGEERKEEEEEENK). Residues 341 to 375 (IEEDEEEDEEEDEEEGKDGEERKEEEEEENKLEDK) are disordered.

Interacts with GSP1.

The protein localises to the cytoplasm. The protein resides in the nucleus. Important for the export of protein containing nuclear export signal (NES) out of the nucleus. Stimulates the GTPase activity of GSP1. The chain is Ran-specific GTPase-activating protein 30 (YRB30) from Saccharomyces cerevisiae (strain ATCC 204508 / S288c) (Baker's yeast).